The following is a 310-amino-acid chain: Retrotransposon Gag-like protein 4 (310 aa).

The CCHC-type zinc-finger motif lies at 278–295 (QLCLYCSQSGHFTRDCLA).

Functionally, involved in cognitive function in the brain, possibly via the noradrenergic system. The sequence is that of Retrotransposon Gag-like protein 4 from Homo sapiens (Human).